The following is a 488-amino-acid chain: Inosine-5'-monophosphate dehydrogenase (488 aa).

CBS domains lie at 95-153 and 157-213; these read VITN…SIKI and MTKE…PHAA. Residues Asp250 and 300–302 each bind NAD(+); that span reads GIG. Residues Gly302 and Gly304 each contribute to the K(+) site. Position 305 (Ser305) interacts with IMP. K(+) is bound at residue Cys307. Residue Cys307 is the Thioimidate intermediate of the active site. Residues 340–342, 363–364, and 387–391 contribute to the IMP site; these read DGG, GS, and YRGMG. Arg403 (proton acceptor) is an active-site residue. Glu417 is an IMP binding site. Residues 467–488 form a disordered region; sequence AGLAESHPHNVQITKESPNYSF. Positions 471, 472, and 473 each coordinate K(+). A compositionally biased stretch (polar residues) spans 475–488; it reads HNVQITKESPNYSF.

This sequence belongs to the IMPDH/GMPR family. Homotetramer. It depends on K(+) as a cofactor.

The enzyme catalyses IMP + NAD(+) + H2O = XMP + NADH + H(+). Its pathway is purine metabolism; XMP biosynthesis via de novo pathway; XMP from IMP: step 1/1. Its activity is regulated as follows. Mycophenolic acid (MPA) is a non-competitive inhibitor that prevents formation of the closed enzyme conformation by binding to the same site as the amobile flap. In contrast, mizoribine monophosphate (MZP) is a competitive inhibitor that induces the closed conformation. MPA is a potent inhibitor of mammalian IMPDHs but a poor inhibitor of the bacterial enzymes. MZP is a more potent inhibitor of bacterial IMPDH. Catalyzes the conversion of inosine 5'-phosphate (IMP) to xanthosine 5'-phosphate (XMP), the first committed and rate-limiting step in the de novo synthesis of guanine nucleotides, and therefore plays an important role in the regulation of cell growth. This chain is Inosine-5'-monophosphate dehydrogenase, found in Staphylococcus haemolyticus (strain JCSC1435).